The chain runs to 172 residues: HAD-like hydrolase superfamily protein P8B7.31 (172 aa).

The active-site Nucleophile is Asp14. Asp14, Asp16, and Asp137 together coordinate Mg(2+). Catalysis depends on Asp16, which acts as the Proton donor.

It belongs to the HAD-like hydrolase superfamily.

The protein resides in the cytoplasm. It localises to the nucleus. This Schizosaccharomyces pombe (strain 972 / ATCC 24843) (Fission yeast) protein is HAD-like hydrolase superfamily protein P8B7.31.